Reading from the N-terminus, the 478-residue chain is RNA pseudouridine synthase 3, mitochondrial (478 aa).

Residues 1–20 (MWKAKTCFRQIYLTVLIRRY) constitute a mitochondrion transit peptide. Residues 92–162 (EEIYDKAIQT…MRISKRYDTI (71 aa)) enclose the S4 RNA-binding domain. Residue D232 is part of the active site.

It belongs to the pseudouridine synthase RluA family.

The protein resides in the mitochondrion. It carries out the reaction a uridine in RNA = a pseudouridine in RNA. The chain is RNA pseudouridine synthase 3, mitochondrial from Arabidopsis thaliana (Mouse-ear cress).